The sequence spans 1067 residues: Zinc finger MIZ domain-containing protein 1 (1067 aa).

Positions 1-120 (MNSMDRHIQQ…HQKSRQSDPP (120 aa)) are sufficient for transactivation activity; sufficient for interaction with NOTCH1. K91 participates in a covalent cross-link: Glycyl lysine isopeptide (Lys-Gly) (interchain with G-Cter in SUMO2). Disordered regions lie at residues 112 to 141 (QKSR…TLSH) and 327 to 542 (NSQF…PFPP). The span at 128–141 (PLSSMSSMKPTLSH) shows a compositional bias: low complexity. The segment covering 413 to 429 (YGNQQYGPNSQFPTQPG) has biased composition (polar residues). The segment covering 431 to 440 (YPAPNPPRPL) has biased composition (pro residues). Low complexity predominate over residues 479-497 (NNTFSGSSYSNYSQGNVNR). The span at 510–521 (SPVPGNPTPPMT) shows a compositional bias: pro residues. An SP-RING-type zinc finger spans residues 727–808 (GEDGVEQTAI…MWGILNAIQH (82 aa)). 4 residues coordinate Zn(2+): C758, H760, C781, and C784. Residues K834 and K843 each participate in a glycyl lysine isopeptide (Lys-Gly) (interchain with G-Cter in SUMO2) cross-link. The transactivation domain stretch occupies residues 837-1067 (PDGIPSKRFK…DDLLSLFENN (231 aa)). Over residues 868–879 (GPSPYPLPPPPG) the composition is skewed to pro residues. Residues 868–1067 (GPSPYPLPPP…DDLLSLFENN (200 aa)) form a disordered region. Composition is skewed to polar residues over residues 881 to 895 (TNSN…NYQG) and 951 to 961 (SSDQPHPSIQQ). Pro residues predominate over residues 981 to 996 (APPPPPSQPPRQPPQA). The span at 1040-1067 (PDELLSYLDPPDLPSNSNDDLLSLFENN) shows a compositional bias: low complexity.

In terms of assembly, interacts with AR, but not with ESR1, NR3C1, PGR, THRB nor VDR. Interacts with NOTCH1 and RBPJ. Interacts with SMARCA4. Interacts (via SP-RING-type domain) with SMAD3 and SMAD4 (via MH2 domain). In terms of tissue distribution, expressed most abundantly in ovary and, at lower levels, in prostate, spleen and testis. Weak expression, if any, in thymus, small intestine, colon and peripheral blood leukocytes.

Its subcellular location is the nucleus. The protein localises to the nucleoplasm. The protein resides in the cytoplasm. In terms of biological role, acts as a transcriptional coactivator. Increases ligand-dependent transcriptional activity of AR and promotes AR sumoylation. The stimulation of AR activity is dependent upon sumoylation. Also functions as a transcriptional coactivator in the TGF-beta signaling pathway by increasing the activity of the SMAD3/SMAD4 transcriptional complex. Involved in transcriptional activation of a subset of NOTCH1 target genes including MYC. Involved in thymocyte and T cell development. Involved in the regulation of postmitotic positioning of pyramidal neurons in the developing cerebral cortex. This is Zinc finger MIZ domain-containing protein 1 from Homo sapiens (Human).